The chain runs to 833 residues: Translation initiation factor IF-2 (833 aa).

A tr-type G domain is found at 331–501 (TRAPVVTVMG…LLIAEMQDLK (171 aa)). Positions 340–347 (GHVDHGKT) are G1. 340–347 (GHVDHGKT) lines the GTP pocket. The G2 stretch occupies residues 365 to 369 (GITQH). The segment at 387-390 (DTPG) is G3. GTP contacts are provided by residues 387–391 (DTPGH) and 441–444 (NKID). The interval 441 to 444 (NKID) is G4. The tract at residues 477 to 479 (SAL) is G5.

Belongs to the TRAFAC class translation factor GTPase superfamily. Classic translation factor GTPase family. IF-2 subfamily.

Its subcellular location is the cytoplasm. One of the essential components for the initiation of protein synthesis. Protects formylmethionyl-tRNA from spontaneous hydrolysis and promotes its binding to the 30S ribosomal subunits. Also involved in the hydrolysis of GTP during the formation of the 70S ribosomal complex. This Rickettsia canadensis (strain McKiel) protein is Translation initiation factor IF-2.